Here is a 727-residue protein sequence, read N- to C-terminus: Putative E3 ubiquitin-protein ligase UNKL (727 aa).

Positions 1–21 are disordered; that stretch reads MPSVSKAAAAALSGSPPQTEK. C3H1-type zinc fingers lie at residues 75-104, 115-145, 243-277, and 285-313; these read YSPDIYCSKYDEATGLCPDGDECPYLHRTT, YYKTGTCIHETDARGHCVKNGLHCAFAHGPL, QYRSTPCPSVKHGDEWGEPSRCDGGDSCQYCHSRT, and IYKSTKCNDMRQTGYCPRGPFCAFAHTEK. Polar residues predominate over residues 330-339; it reads STSAYSSQPG. 3 disordered regions span residues 330 to 360, 446 to 514, and 543 to 562; these read STSAYSSQPGSAKRKDSPSEGSQKATEDSKQ, LTGP…ATLG, and SPSPILNSGPSASSSASPNS. Residues 463–495 are compositionally biased toward low complexity; that stretch reads SLPRSPSLHSSSSLSTSPLSSLSQSLSGPLVSS. The RING-type zinc finger occupies 686–721; the sequence is CVACQERAHGTVLRPCQHRVLCEPCAASTPECPYCK.

This sequence belongs to the unkempt family. As to quaternary structure, interacts with the GTP-bound form of Rac1. Interacts with Baf60b/Smarcd2. In terms of processing, ubiquitination is enhanced by activated Rac1. The presence of the RING finger domain is not essential for ubiquitination to occur. In terms of tissue distribution, ubiquitous.

It localises to the cytoplasm. The protein resides in the nucleus. Its pathway is protein modification; protein ubiquitination. Its function is as follows. May participate in a protein complex showing an E3 ligase activity regulated by Rac1. Ubiquitination is directed towards itself and possibly other substrates, such as Baf60b/Smarcd2. Intrinsic E3 ligase activity has not been proven. The polypeptide is Putative E3 ubiquitin-protein ligase UNKL (Unkl) (Mus musculus (Mouse)).